Here is a 66-residue protein sequence, read N- to C-terminus: Conotoxin Bu1.4 (66 aa).

A signal peptide spans 1-23; sequence MGMRMRMMFTVFLLVVLANTVVS. A propeptide spanning residues 24-46 is cleaved from the precursor; the sequence is FPSDRDSDGADAEASDEPVEFER. The interval 25 to 48 is disordered; sequence PSDRDSDGADAEASDEPVEFERDE. The span at 32 to 42 shows a compositional bias: acidic residues; sequence GADAEASDEPV. Cystine bridges form between Cys-51/Cys-57 and Cys-52/Cys-62. At Thr-63 the chain carries Threonine amide.

It belongs to the conotoxin A superfamily. As to expression, expressed by the venom duct.

The protein localises to the secreted. This is Conotoxin Bu1.4 from Conus bullatus (Bubble cone).